We begin with the raw amino-acid sequence, 334 residues long: Putative lysine N-acyltransferase C17G9.06c (334 aa).

His-248 is a binding site for substrate. The active-site Proton acceptor is the Glu-286.

Belongs to the lysine N-acyltransferase mbtK family.

It localises to the cytoplasm. The protein localises to the nucleus. This chain is Putative lysine N-acyltransferase C17G9.06c, found in Schizosaccharomyces pombe (strain 972 / ATCC 24843) (Fission yeast).